The following is a 394-amino-acid chain: Monoterpene synthase FDS-5, chloroplastic (394 aa).

Residues 1 to 65 (MASFISLSSK…NLNSQFMQVY (65 aa)) constitute a chloroplast transit peptide. Isopentenyl diphosphate is bound by residues lysine 100, arginine 103, and glutamine 138. Positions 145 and 149 each coordinate Mg(2+). A DDXXD motif motif is present at residues 145 to 149 (DDMMD). Arginine 154 is a dimethylallyl diphosphate binding site. Arginine 155 contacts isopentenyl diphosphate. Dimethylallyl diphosphate contacts are provided by lysine 242, glutamine 281, lysine 298, and lysine 307.

This sequence belongs to the FPP/GGPP synthase family. Requires Mg(2+) as cofactor. Mn(2+) is required as a cofactor.

Its subcellular location is the plastid. The protein localises to the chloroplast. The catalysed reaction is isopentenyl diphosphate + dimethylallyl diphosphate = (2E)-geranyl diphosphate + diphosphate. It catalyses the reaction 2 dimethylallyl diphosphate = (R,R)-chrysanthemyl diphosphate + diphosphate. The enzyme catalyses 2 dimethylallyl diphosphate = (R)-lavandulyl diphosphate + diphosphate. Its function is as follows. Condenses two molecules of dimethylallyl diphosphate (DMAPP) to produce mainly an irregular monoterpene, chrysanthemyl diphosphate (CPP) and lower amounts of a branched monoterpene, lavandulyl diphosphate (LPP). CPP is a precursor of the pyrethrin insecticides. When incubated with isopentenyl diphosphate (IPP) and DMAPP, catalyzes three competing isoprenoid condensation reactions, a chain elongation to give geranyl diphosphate (GPP), a cyclopropanation to give CPP and a branching to give LPP. The sequence is that of Monoterpene synthase FDS-5, chloroplastic (FDS-5) from Artemisia spiciformis (Spiked big sagebrush).